The chain runs to 388 residues: Succinate--CoA ligase [ADP-forming] subunit beta (388 aa).

In terms of domain architecture, ATP-grasp spans 9-244; the sequence is KQLFARYGLP…QSQEDPREAQ (236 aa). ATP is bound by residues Lys-46, 53–55, Glu-99, Thr-102, and Glu-107; that span reads GRG. 2 residues coordinate Mg(2+): Asn-199 and Asp-213. Substrate-binding positions include Asn-264 and 321–323; that span reads GIV.

This sequence belongs to the succinate/malate CoA ligase beta subunit family. Heterotetramer of two alpha and two beta subunits. Mg(2+) serves as cofactor.

It catalyses the reaction succinate + ATP + CoA = succinyl-CoA + ADP + phosphate. The enzyme catalyses GTP + succinate + CoA = succinyl-CoA + GDP + phosphate. The protein operates within carbohydrate metabolism; tricarboxylic acid cycle; succinate from succinyl-CoA (ligase route): step 1/1. Its function is as follows. Succinyl-CoA synthetase functions in the citric acid cycle (TCA), coupling the hydrolysis of succinyl-CoA to the synthesis of either ATP or GTP and thus represents the only step of substrate-level phosphorylation in the TCA. The beta subunit provides nucleotide specificity of the enzyme and binds the substrate succinate, while the binding sites for coenzyme A and phosphate are found in the alpha subunit. This Escherichia coli O8 (strain IAI1) protein is Succinate--CoA ligase [ADP-forming] subunit beta.